Reading from the N-terminus, the 428-residue chain is Cytochrome c biogenesis protein CcsB (428 aa).

A run of 3 helical transmembrane segments spans residues 14-34 (LRFAISLIIFIAITSGIGTFI), 72-92 (SIWFLFTLILLCISLSACSFR), and 162-182 (IGPLVVHIGLIVLLLGSAYGS).

This sequence belongs to the Ccs1/CcsB family. May interact with CcsA.

The protein localises to the cellular thylakoid membrane. In terms of biological role, required during biogenesis of c-type cytochromes (cytochrome c6 and cytochrome f) at the step of heme attachment. The protein is Cytochrome c biogenesis protein CcsB of Prochlorococcus marinus (strain MIT 9312).